Consider the following 423-residue polypeptide: tRNA(Ile2) 2-agmatinylcytidine synthetase TiaS (423 aa).

The OB DNA-binding region spans 273-347 (VIVYGRVVEE…GINIEKIKIL (75 aa)).

It belongs to the TiaS family.

Its subcellular location is the cytoplasm. It catalyses the reaction cytidine(34) in tRNA(Ile2) + agmatine + ATP + H2O = 2-agmatinylcytidine(34) in tRNA(Ile2) + AMP + 2 phosphate + 2 H(+). Functionally, ATP-dependent agmatine transferase that catalyzes the formation of 2-agmatinylcytidine (agm2C) at the wobble position (C34) of tRNA(Ile2), converting the codon specificity from AUG to AUA. The chain is tRNA(Ile2) 2-agmatinylcytidine synthetase TiaS from Methanocaldococcus jannaschii (strain ATCC 43067 / DSM 2661 / JAL-1 / JCM 10045 / NBRC 100440) (Methanococcus jannaschii).